The sequence spans 472 residues: Glutamate--tRNA ligase (472 aa).

Residues 7-17 (PSPTGFLHVGG) carry the 'HIGH' region motif. The Zn(2+) site is built by cysteine 96, cysteine 98, cysteine 123, and histidine 125. Positions 112-129 (ARKEKPRYDGRCRHRSEP) are enriched in basic and acidic residues. The tract at residues 112–134 (ARKEKPRYDGRCRHRSEPPSDQP) is disordered. Residues 234–238 (KLSKR) carry the 'KMSKS' region motif. Lysine 237 is an ATP binding site.

This sequence belongs to the class-I aminoacyl-tRNA synthetase family. Glutamate--tRNA ligase type 1 subfamily. Monomer. It depends on Zn(2+) as a cofactor.

The protein resides in the cytoplasm. It carries out the reaction tRNA(Glu) + L-glutamate + ATP = L-glutamyl-tRNA(Glu) + AMP + diphosphate. Catalyzes the attachment of glutamate to tRNA(Glu) in a two-step reaction: glutamate is first activated by ATP to form Glu-AMP and then transferred to the acceptor end of tRNA(Glu). The sequence is that of Glutamate--tRNA ligase from Magnetococcus marinus (strain ATCC BAA-1437 / JCM 17883 / MC-1).